We begin with the raw amino-acid sequence, 475 residues long: Sulfate adenylyltransferase subunit 1 (475 aa).

The region spanning 25–239 (KSLLRFLTCG…EVLETVEIQR (215 aa)) is the tr-type G domain. The tract at residues 34-41 (GSVDDGKS) is G1. 34–41 (GSVDDGKS) is a binding site for GTP. The interval 92 to 96 (GITID) is G2. The G3 stretch occupies residues 113–116 (DTPG). Residues 113-117 (DTPGH) and 168-171 (NKMD) contribute to the GTP site. Positions 168–171 (NKMD) are G4. The segment at 206-208 (SAL) is G5.

The protein belongs to the TRAFAC class translation factor GTPase superfamily. Classic translation factor GTPase family. CysN/NodQ subfamily. In terms of assembly, heterodimer composed of CysD, the smaller subunit, and CysN.

It catalyses the reaction sulfate + ATP + H(+) = adenosine 5'-phosphosulfate + diphosphate. The protein operates within sulfur metabolism; hydrogen sulfide biosynthesis; sulfite from sulfate: step 1/3. Its function is as follows. With CysD forms the ATP sulfurylase (ATPS) that catalyzes the adenylation of sulfate producing adenosine 5'-phosphosulfate (APS) and diphosphate, the first enzymatic step in sulfur assimilation pathway. APS synthesis involves the formation of a high-energy phosphoric-sulfuric acid anhydride bond driven by GTP hydrolysis by CysN coupled to ATP hydrolysis by CysD. This Escherichia coli O157:H7 protein is Sulfate adenylyltransferase subunit 1.